Consider the following 1308-residue polypeptide: Transposon TX1 uncharacterized 149 kDa protein (1308 aa).

Positions 494-765 constitute a Reverse transcriptase domain; the sequence is EAFKKGELPL…KIIKYLGVYL (272 aa).

The polypeptide is Transposon TX1 uncharacterized 149 kDa protein (Xenopus laevis (African clawed frog)).